Reading from the N-terminus, the 115-residue chain is Secreted RxLR effector protein 2 (115 aa).

The signal sequence occupies residues Met-1–Ala-22. A RxLR-dEER motif is present at residues Arg-57 to Arg-82.

Belongs to the RxLR effector family.

The protein resides in the secreted. It localises to the host cytoplasm. The protein localises to the host nucleus. In terms of biological role, effector that acts as a broad suppressor of cell death to interrupt plant immunity. Inhibits cell death induced by cell death-inducing proteins, including the PAMP elicitor INF1 from P.infestans. This Plasmopara viticola (Downy mildew of grapevine) protein is Secreted RxLR effector protein 2.